Here is a 259-residue protein sequence, read N- to C-terminus: 4-hydroxy-tetrahydrodipicolinate reductase (259 aa).

NAD(+) contacts are provided by residues 8–13 (GFKGRM), 93–95 (GTT), and 119–122 (APNF). Catalysis depends on His149, which acts as the Proton donor/acceptor. Residue His150 coordinates (S)-2,3,4,5-tetrahydrodipicolinate. Residue Lys153 is the Proton donor of the active site. 159–160 (GT) lines the (S)-2,3,4,5-tetrahydrodipicolinate pocket.

Belongs to the DapB family.

It is found in the cytoplasm. The catalysed reaction is (S)-2,3,4,5-tetrahydrodipicolinate + NAD(+) + H2O = (2S,4S)-4-hydroxy-2,3,4,5-tetrahydrodipicolinate + NADH + H(+). It catalyses the reaction (S)-2,3,4,5-tetrahydrodipicolinate + NADP(+) + H2O = (2S,4S)-4-hydroxy-2,3,4,5-tetrahydrodipicolinate + NADPH + H(+). The protein operates within amino-acid biosynthesis; L-lysine biosynthesis via DAP pathway; (S)-tetrahydrodipicolinate from L-aspartate: step 4/4. In terms of biological role, catalyzes the conversion of 4-hydroxy-tetrahydrodipicolinate (HTPA) to tetrahydrodipicolinate. The sequence is that of 4-hydroxy-tetrahydrodipicolinate reductase from Enterococcus faecalis (strain ATCC 700802 / V583).